A 353-amino-acid chain; its full sequence is Guanine nucleotide-binding protein alpha-1 subunit (353 aa).

The segment at 1–26 (MGCGMSTEEKEGKARNEEIENQLKRD) is disordered. Glycine 2 is lipidated: N-myristoyl glycine. Cysteine 3 carries S-palmitoyl cysteine lipidation. A compositionally biased stretch (basic and acidic residues) spans 7 to 26 (TEEKEGKARNEEIENQLKRD). Residues 32–353 (NEIKMLLLGA…QENLRLCGLI (322 aa)) form the G-alpha domain. Residues 35–48 (KMLLLGAGESGKST) form a G1 motif region. Residues glutamate 43, serine 44, glycine 45, lysine 46, serine 47, threonine 48, aspartate 150, leucine 175, threonine 181, glycine 203, asparagine 269, lysine 270, aspartate 272, and alanine 325 each coordinate GTP. Serine 47 provides a ligand contact to Mg(2+). Residues 173-181 (DVLRSRVKT) form a G2 motif region. Threonine 181 lines the Mg(2+) pocket. A G3 motif region spans residues 196–205 (YRMFDVGGQR). The interval 265-272 (ILFLNKID) is G4 motif. The tract at residues 323 to 328 (TCATDT) is G5 motif.

It belongs to the G-alpha family. G(q) subfamily. In terms of assembly, g proteins are composed of 3 units; alpha, beta and gamma. The alpha chain contains the guanine nucleotide binding site. Mg(2+) is required as a cofactor.

In terms of biological role, guanine nucleotide-binding proteins (G proteins) are involved as modulators or transducers in various transmembrane signaling systems. This Neurospora crassa (strain ATCC 24698 / 74-OR23-1A / CBS 708.71 / DSM 1257 / FGSC 987) protein is Guanine nucleotide-binding protein alpha-1 subunit (gna-1).